The following is a 261-amino-acid chain: Taurine import ATP-binding protein TauB (261 aa).

Residues leucine 4 to alanine 233 enclose the ABC transporter domain. An ATP-binding site is contributed by glycine 38 to threonine 45.

Belongs to the ABC transporter superfamily. Taurine importer (TC 3.A.1.17.1) family. The complex is composed of two ATP-binding proteins (TauB), two transmembrane proteins (TauC) and a solute-binding protein (TauA).

The protein localises to the cell inner membrane. It carries out the reaction taurine(out) + ATP + H2O = taurine(in) + ADP + phosphate + H(+). Functionally, part of the ABC transporter complex TauABC involved in taurine import. Responsible for energy coupling to the transport system. This chain is Taurine import ATP-binding protein TauB, found in Chromobacterium violaceum (strain ATCC 12472 / DSM 30191 / JCM 1249 / CCUG 213 / NBRC 12614 / NCIMB 9131 / NCTC 9757 / MK).